Consider the following 178-residue polypeptide: MPAYHSILMESDTKLIGNMAMLPIRSQFKGPAPRETKDTDIIDEAIYYFKANVFFKNYEIKNEADRTLIYITLYISECLKKLQKCNSKGQGEKEMYTLGITNFPIPGEPGFPLNAMYVKPSNKQEDEVMRAYLQQLRQETGLRLCDKVFDPQTDKPSKWWICFVKKQFMNKSLSGPGQ.

Belongs to the ARPC3 family. Component of the Arp2/3 complex composed of actr2/arp2, actr3/arp3, arpc1 (arpc1a or arpc1b), arpc2, arpc3, arpc4 and arpc5.

The protein localises to the cytoplasm. It localises to the cytoskeleton. It is found in the cell projection. The protein resides in the nucleus. In terms of biological role, component of the Arp2/3 complex, a multiprotein complex that mediates actin polymerization upon stimulation by nucleation-promoting factor (NPF). The Arp2/3 complex mediates the formation of branched actin networks in the cytoplasm, providing the force for cell motility. In addition to its role in the cytoplasmic cytoskeleton, the Arp2/3 complex also promotes actin polymerization in the nucleus, thereby regulating gene transcription and repair of damaged DNA. The Arp2/3 complex promotes homologous recombination (HR) repair in response to DNA damage by promoting nuclear actin polymerization, leading to drive motility of double-strand breaks (DSBs). The chain is Actin-related protein 2/3 complex subunit 3-B (arpc3-b) from Xenopus laevis (African clawed frog).